Consider the following 608-residue polypeptide: tRNA (guanine(37)-N(1))-methyltransferase 1 (608 aa).

Residues Ser207–Lys229 are disordered. The segment covering Lys216–Lys229 has biased composition (basic and acidic residues). S-adenosyl-L-methionine is bound by residues Arg425, Asp463–Leu464, Asp491–Gly492, and Asn514.

Belongs to the class I-like SAM-binding methyltransferase superfamily. TRM5/TYW2 family. Monomer.

The protein localises to the mitochondrion matrix. It is found in the nucleus. It localises to the cytoplasm. The enzyme catalyses guanosine(37) in tRNA + S-adenosyl-L-methionine = N(1)-methylguanosine(37) in tRNA + S-adenosyl-L-homocysteine + H(+). Its function is as follows. Specifically methylates the N1 position of guanosine-37 in various cytoplasmic and mitochondrial tRNAs. Methylation is not dependent on the nature of the nucleoside 5' of the target nucleoside. This is the first step in the biosynthesis of wybutosine (yW), a modified base adjacent to the anticodon of tRNAs and required for accurate decoding. The sequence is that of tRNA (guanine(37)-N(1))-methyltransferase 1 from Vitis vinifera (Grape).